The chain runs to 264 residues: Rano class II histocompatibility antigen, D-1 beta chain (264 aa).

The first 26 residues, 1–26, serve as a signal peptide directing secretion; the sequence is MVWLARDSCVAAVILLLTVLSPPVAL. A beta-1 region spans residues 27-120; sequence VRDPTPRFLE…EISESFLVPR (94 aa). At 27 to 226 the chain is on the extracellular side; the sequence is VRDPTPRFLE…AQSTSAQNKK (200 aa). 2 disulfide bridges follow: cysteine 42–cysteine 106 and cysteine 144–cysteine 200. Residue asparagine 46 is glycosylated (N-linked (GlcNAc...) asparagine). Positions 121 to 215 are beta-2; the sequence is TVEPKVTVYP…SLPSPVRVEW (95 aa). The Ig-like C1-type domain maps to 124–228; the sequence is PKVTVYPSKT…STSAQNKKMS (105 aa). A connecting peptide region spans residues 216 to 226; sequence KAQSTSAQNKK. The chain crosses the membrane as a helical span at residues 227–248; sequence MSGVGGIVLGLLFLGAGLFVYF. Residues 249-264 lie on the Cytoplasmic side of the membrane; it reads RNQKGQSGLQPTGLLN.

It belongs to the MHC class II family.

It localises to the membrane. Involved in the presentation of foreign antigens to the immune system. The polypeptide is Rano class II histocompatibility antigen, D-1 beta chain (RT1-Db1) (Rattus norvegicus (Rat)).